Reading from the N-terminus, the 515-residue chain is 1-pyrroline-5-carboxylate dehydrogenase 1 (515 aa).

Catalysis depends on residues Glu-286 and Cys-320.

It belongs to the aldehyde dehydrogenase family. RocA subfamily.

The catalysed reaction is L-glutamate 5-semialdehyde + NAD(+) + H2O = L-glutamate + NADH + 2 H(+). The protein operates within amino-acid degradation; L-proline degradation into L-glutamate; L-glutamate from L-proline: step 2/2. In Halalkalibacterium halodurans (strain ATCC BAA-125 / DSM 18197 / FERM 7344 / JCM 9153 / C-125) (Bacillus halodurans), this protein is 1-pyrroline-5-carboxylate dehydrogenase 1 (rocA1).